The chain runs to 360 residues: Phospho-N-acetylmuramoyl-pentapeptide-transferase (360 aa).

Transmembrane regions (helical) follow at residues 27–47 (GAFM…INVL), 71–91 (TPTM…LLWA), 93–113 (WDNP…LIGF), 134–154 (LALG…NHPA), 168–188 (TLIN…VGSA), 199–219 (GLAI…AYAV), 239–259 (ILIF…YNAP), 262–282 (AVFM…AIAV), 288–308 (LVLA…IIQV), and 337–357 (TIVI…LATL).

This sequence belongs to the glycosyltransferase 4 family. MraY subfamily. Mg(2+) is required as a cofactor.

The protein resides in the cell inner membrane. It catalyses the reaction UDP-N-acetyl-alpha-D-muramoyl-L-alanyl-gamma-D-glutamyl-meso-2,6-diaminopimeloyl-D-alanyl-D-alanine + di-trans,octa-cis-undecaprenyl phosphate = di-trans,octa-cis-undecaprenyl diphospho-N-acetyl-alpha-D-muramoyl-L-alanyl-D-glutamyl-meso-2,6-diaminopimeloyl-D-alanyl-D-alanine + UMP. It functions in the pathway cell wall biogenesis; peptidoglycan biosynthesis. In terms of biological role, catalyzes the initial step of the lipid cycle reactions in the biosynthesis of the cell wall peptidoglycan: transfers peptidoglycan precursor phospho-MurNAc-pentapeptide from UDP-MurNAc-pentapeptide onto the lipid carrier undecaprenyl phosphate, yielding undecaprenyl-pyrophosphoryl-MurNAc-pentapeptide, known as lipid I. The sequence is that of Phospho-N-acetylmuramoyl-pentapeptide-transferase from Ruegeria pomeroyi (strain ATCC 700808 / DSM 15171 / DSS-3) (Silicibacter pomeroyi).